We begin with the raw amino-acid sequence, 570 residues long: Sulfite reductase [NADPH] hemoprotein beta-component (570 aa).

[4Fe-4S] cluster-binding residues include Cys434, Cys440, Cys479, and Cys483. Cys483 is a binding site for siroheme.

It belongs to the nitrite and sulfite reductase 4Fe-4S domain family. Alpha(8)-beta(8). The alpha component is a flavoprotein, the beta component is a hemoprotein. It depends on siroheme as a cofactor. Requires [4Fe-4S] cluster as cofactor.

The catalysed reaction is hydrogen sulfide + 3 NADP(+) + 3 H2O = sulfite + 3 NADPH + 4 H(+). It functions in the pathway sulfur metabolism; hydrogen sulfide biosynthesis; hydrogen sulfide from sulfite (NADPH route): step 1/1. Component of the sulfite reductase complex that catalyzes the 6-electron reduction of sulfite to sulfide. This is one of several activities required for the biosynthesis of L-cysteine from sulfate. The protein is Sulfite reductase [NADPH] hemoprotein beta-component of Salmonella enteritidis PT4 (strain P125109).